The primary structure comprises 192 residues: Potassium channel HX13_20290 (192 aa).

Residues 1–24 (MTKGRLEAFSDGVLAIIITIMVLE) traverse the membrane as a helical segment. A RxxxFSD motif motif is present at residues 5-11 (RLEAFSD). Residue Leu25 is a topological domain, cytoplasmic. The short helix H1 stretch occupies residues 26–29 (KVPE). The Extracellular portion of the chain corresponds to 26-39 (KVPEGSSWASLQPI). A short helix H2 region spans residues 31–37 (SSWASLQ). A helical membrane pass occupies residues 40–65 (LPRFLAYIFSFIYVGIYWNNHHHLFQ). Residues 66–71 (TVKKVN) lie on the Cytoplasmic side of the membrane. A helical transmembrane segment spans residues 72–93 (GSILWANLHLLFWLSLMPIATE). Topologically, residues 94–101 (WIGTSHFA) are extracellular. The helical transmembrane segment at 102–126 (QNPVATYGIGLIMSAIAYTILENVI) threads the bilayer. Residues 127–133 (IRCEGEN) lie on the Cytoplasmic side of the membrane. A helical transmembrane segment spans residues 134–162 (SKLKEAIHSKFKEYISIIFYVLGIATSFF). Residues 163–164 (YP) are Extracellular-facing. The helical transmembrane segment at 165–180 (YIAIGFYYLVALIWLI) threads the bilayer. The Cytoplasmic segment spans residues 181 to 192 (PDKRIEKSLKEN).

Belongs to the TMEM175 family. As to quaternary structure, homotetramer.

It is found in the membrane. The catalysed reaction is K(+)(in) = K(+)(out). Its function is as follows. Potassium channel. This Chryseobacterium sp. (strain P1-3) protein is Potassium channel HX13_20290.